A 687-amino-acid chain; its full sequence is Homeobox-leucine zipper protein HDG12 (687 aa).

The interval 1–32 is disordered; it reads MEFLGDSQNHDSSETEKKNKKKKRFHRHTPHQ. Residues 8-17 are compositionally biased toward basic and acidic residues; that stretch reads QNHDSSETEK. Basic residues predominate over residues 18-30; the sequence is KNKKKKRFHRHTP. The homeobox DNA-binding region spans 21 to 80; that stretch reads KKKRFHRHTPHQIQRLESTFNECQHPDEKQRNQLSRELGLAPRQIKFWFQNRRTQKKAQH. Residues 87 to 150 are a coiled coil; that stretch reads ALKEENDKIR…LERVSSIAAK (64 aa). An START domain is found at 206–440; that stretch reads SEMDKSLMTN…LQRMCERFTN (235 aa).

It belongs to the HD-ZIP homeobox family. Class IV subfamily. In terms of assembly, interacts with BBM. In terms of tissue distribution, expressed in apical meristems and young epidermal tissue including trichomes and stipules. Expressed in lateral root tips, the L1 layer of apical inflorescence meristems and early flower primordia, carpel and stamen filament epidermis, stigma papillae, ovule primordia, nucellus and embryo.

Its subcellular location is the nucleus. Its function is as follows. Probable transcription factor that acts as a negative regulator of trichome branching in association with HDG11. Seems to promote cell differentiation. May regulate cell differentiation and proliferation during root and shoot meristem development. Acts as a positive regulator of SCL18/LAS expression. Involved, together with PDF2, in the regulation of flower organs development by promoting the expression of APETALA 3 (AP3) in the epidermis and internal cell layers of developing flowers. The sequence is that of Homeobox-leucine zipper protein HDG12 from Arabidopsis thaliana (Mouse-ear cress).